We begin with the raw amino-acid sequence, 215 residues long: Thiamine-phosphate synthase (215 aa).

4-amino-2-methyl-5-(diphosphooxymethyl)pyrimidine is bound by residues 43 to 47 and asparagine 75; that span reads QLRDK. Residues aspartate 76 and aspartate 95 each coordinate Mg(2+). Serine 114 serves as a coordination point for 4-amino-2-methyl-5-(diphosphooxymethyl)pyrimidine. 141–143 is a 2-[(2R,5Z)-2-carboxy-4-methylthiazol-5(2H)-ylidene]ethyl phosphate binding site; that stretch reads TPT. Residue lysine 144 participates in 4-amino-2-methyl-5-(diphosphooxymethyl)pyrimidine binding. Residue glycine 172 coordinates 2-[(2R,5Z)-2-carboxy-4-methylthiazol-5(2H)-ylidene]ethyl phosphate.

This sequence belongs to the thiamine-phosphate synthase family. Mg(2+) is required as a cofactor.

The catalysed reaction is 2-[(2R,5Z)-2-carboxy-4-methylthiazol-5(2H)-ylidene]ethyl phosphate + 4-amino-2-methyl-5-(diphosphooxymethyl)pyrimidine + 2 H(+) = thiamine phosphate + CO2 + diphosphate. It catalyses the reaction 2-(2-carboxy-4-methylthiazol-5-yl)ethyl phosphate + 4-amino-2-methyl-5-(diphosphooxymethyl)pyrimidine + 2 H(+) = thiamine phosphate + CO2 + diphosphate. It carries out the reaction 4-methyl-5-(2-phosphooxyethyl)-thiazole + 4-amino-2-methyl-5-(diphosphooxymethyl)pyrimidine + H(+) = thiamine phosphate + diphosphate. Its pathway is cofactor biosynthesis; thiamine diphosphate biosynthesis; thiamine phosphate from 4-amino-2-methyl-5-diphosphomethylpyrimidine and 4-methyl-5-(2-phosphoethyl)-thiazole: step 1/1. Its function is as follows. Condenses 4-methyl-5-(beta-hydroxyethyl)thiazole monophosphate (THZ-P) and 2-methyl-4-amino-5-hydroxymethyl pyrimidine pyrophosphate (HMP-PP) to form thiamine monophosphate (TMP). The polypeptide is Thiamine-phosphate synthase (Streptomyces avermitilis (strain ATCC 31267 / DSM 46492 / JCM 5070 / NBRC 14893 / NCIMB 12804 / NRRL 8165 / MA-4680)).